The following is a 772-amino-acid chain: Mitochondrial intermediate peptidase (772 aa).

A mitochondrion-targeting transit peptide spans 1–42 (MFANSARNALKKRPQNLQPFRFQGCLFSKRANRPLTTKVQHL). A Zn(2+)-binding site is contributed by His556. Glu557 is an active-site residue. 2 residues coordinate Zn(2+): His560 and His563.

This sequence belongs to the peptidase M3 family. Zn(2+) is required as a cofactor.

The protein resides in the mitochondrion matrix. The catalysed reaction is Release of an N-terminal octapeptide as second stage of processing of some proteins imported into the mitochondrion.. Cleaves proteins, imported into the mitochondrion, to their mature size. While most mitochondrial precursor proteins are processed to the mature form in one step by mitochondrial processing peptidase (MPP), the sequential cleavage by MIP of an octapeptide after initial processing by MPP is a required step for a subgroup of nuclear-encoded precursor proteins destined for the matrix or the inner membrane. The sequence is that of Mitochondrial intermediate peptidase (OCT1) from Laccaria bicolor (strain S238N-H82 / ATCC MYA-4686) (Bicoloured deceiver).